A 59-amino-acid chain; its full sequence is Small ribosomal subunit protein bS21 (59 aa).

A disordered region spans residues 35 to 59 (REHYEKPSVKKKKKSEAAKRKKRNF). A compositionally biased stretch (basic residues) spans 43-59 (VKKKKKSEAAKRKKRNF).

Belongs to the bacterial ribosomal protein bS21 family.

This Finegoldia magna (strain ATCC 29328 / DSM 20472 / WAL 2508) (Peptostreptococcus magnus) protein is Small ribosomal subunit protein bS21.